Here is a 417-residue protein sequence, read N- to C-terminus: Probable serpin E3 (417 aa).

The first 24 residues, 1 to 24 (MPQLSASSLFICLWLVDLCHVANS), serve as a signal peptide directing secretion. Residues Asn-50, Asn-106, Asn-140, Asn-147, and Asn-152 are each glycosylated (N-linked (GlcNAc...) asparagine).

It belongs to the serpin family.

It is found in the secreted. Probable serine protease inhibitor. In Danio rerio (Zebrafish), this protein is Probable serpin E3 (serpine3).